The following is a 229-amino-acid chain: Potassium/proton antiporter CemA (229 aa).

Transmembrane regions (helical) follow at residues L7–F27, I106–L126, and I189–I209.

The protein belongs to the CemA family.

It localises to the plastid. It is found in the chloroplast inner membrane. It carries out the reaction K(+)(in) + H(+)(out) = K(+)(out) + H(+)(in). Contributes to K(+)/H(+) antiport activity by supporting proton efflux to control proton extrusion and homeostasis in chloroplasts in a light-dependent manner to modulate photosynthesis. Prevents excessive induction of non-photochemical quenching (NPQ) under continuous-light conditions. Indirectly promotes efficient inorganic carbon uptake into chloroplasts. This Calycanthus floridus var. glaucus (Eastern sweetshrub) protein is Potassium/proton antiporter CemA.